Here is a 1148-residue protein sequence, read N- to C-terminus: Trafficking protein particle complex subunit 9 (1148 aa).

Residues S566 and S953 each carry the phosphoserine modification.

It belongs to the NIBP family. In terms of assembly, component of the multisubunit TRAPP (transport protein particle) complex, which includes at least TRAPPC2, TRAPPC2L, TRAPPC3, TRAPPC3L, TRAPPC4, TRAPPC5, TRAPPC8, TRAPPC9, TRAPPC10, TRAPPC11 and TRAPPC12. Directly interacts with IKBKB and MAP3K14. In terms of tissue distribution, expressed in neurons of the pyramidal layer of the cortex, in spinal cord motor neurons and white matter neurons (at protein level).

The protein resides in the golgi apparatus. Its subcellular location is the cis-Golgi network. It is found in the endoplasmic reticulum. It localises to the cytoplasm. Functionally, functions as an activator of NF-kappa-B through increased phosphorylation of the IKK complex. May function in neuronal cells differentiation. May play a role in vesicular transport from endoplasmic reticulum to Golgi. The polypeptide is Trafficking protein particle complex subunit 9 (Trappc9) (Mus musculus (Mouse)).